A 1040-amino-acid chain; its full sequence is Probable starch synthase 4, chloroplastic/amyloplastic (1040 aa).

The transit peptide at 1-42 (MTTKLSSFCFLTHGLAGISCEREHGSSRRFFYLPSRRLVSTS) directs the protein to the chloroplast. The tract at residues 43-142 (CKMRQQRGFD…KSKTAKKKGE (100 aa)) is disordered. Basic and acidic residues-rich tracts occupy residues 52–61 (DSSKRQEVKK) and 112–124 (NHAD…KDDI). The stretch at 187 to 466 (ELMTMIRSAE…EESKKKSRDE (280 aa)) forms a coiled coil. Residues K556, G559, and D562 each contribute to the ADP site. Positions 679 and 680 each coordinate (1,4-alpha-D-glucosyl)n. 7 residues coordinate ADP: R849, K854, K906, D908, Y916, L933, and T934.

The protein belongs to the glycosyltransferase 1 family. Bacterial/plant glycogen synthase subfamily. In terms of assembly, interacts with PTST2. Interacts with PII1; the interaction is essential for the initiation of starch granules biosynthesis in leaf chloroplasts. As to expression, expressed in leaves and flowers.

The protein resides in the plastid. It localises to the chloroplast. It is found in the amyloplast. The protein localises to the chloroplast stroma. The catalysed reaction is [(1-&gt;4)-alpha-D-glucosyl](n) + ADP-alpha-D-glucose = [(1-&gt;4)-alpha-D-glucosyl](n+1) + ADP + H(+). It functions in the pathway glycan biosynthesis; starch biosynthesis. Its function is as follows. Probably involved in the priming of starch granule formation. May play a regulatory role in the control of starch accumulation in plastids. Is necessary and sufficient to establish the correct number of starch granules observed in chloroplasts. The chain is Probable starch synthase 4, chloroplastic/amyloplastic from Arabidopsis thaliana (Mouse-ear cress).